The chain runs to 337 residues: G-protein coupled receptor 26 (337 aa).

Residues 1-10 (MNSWDAGLAG) lie on the Extracellular side of the membrane. A helical transmembrane segment spans residues 11–31 (LLVGTIGVSLLSNGLVLLCLL). The Cytoplasmic segment spans residues 32–47 (HSADIRRQAPALFTLN). A helical membrane pass occupies residues 48–68 (LTCGNLLCTVVNMPLTLAGVV). At 69–81 (AQRQPAGDRLCRL) the chain is on the extracellular side. The cysteines at positions 79 and 156 are disulfide-linked. A helical membrane pass occupies residues 82–102 (AAFLDTFLAANSMLSMAALSI). At 103–123 (DRWVAVVFPLSYRAKMRLRDA) the chain is on the cytoplasmic side. A helical membrane pass occupies residues 124-144 (AFMVAYTWLHALTFPATALAL). The Extracellular portion of the chain corresponds to 145–168 (SWLGFHQLYASCTLCSRRPDERLR). A helical membrane pass occupies residues 169–189 (FAVFTSAFHALSFLLSFIVLC). The Cytoplasmic portion of the chain corresponds to 190–245 (FTYLKVLKVARFHCKRIDVITMQTLVLLVDIHPSVRERCLEEQKRRRQRATKKIST). A helical membrane pass occupies residues 246 to 266 (FIGTFLVCFAPYVITRLVELF). Over 267–276 (STAPIGSHWG) the chain is Extracellular. Residues 277–297 (VLSKCLAYSKAASDPFVYSLL) traverse the membrane as a helical segment. Residues 298 to 337 (RHQYRRSCKELLNRIFNRRSLHSVGLTGDSHSQNILPVSE) lie on the Cytoplasmic side of the membrane.

It belongs to the G-protein coupled receptor 1 family. As to expression, exclusively expressed in the brain. Prominent expression is detected throughout the entire neocortex at all rostrocaudal and dorsoventral levels. Strong expression is detected in olfactory and auditory sensory areas.

The protein localises to the cell membrane. In terms of biological role, orphan receptor. Displays a significant level of constitutive activity. Its effect is mediated by G(s)-alpha protein that stimulate adenylate cyclase, resulting in an elevation of intracellular cAMP. This chain is G-protein coupled receptor 26 (Gpr26), found in Mus musculus (Mouse).